Reading from the N-terminus, the 993-residue chain is Signal peptide, CUB and EGF-like domain-containing protein 3 (993 aa).

The signal sequence occupies residues 1–20 (MGSGRVPGLCLLVLLVHARA). One can recognise an EGF-like 1; calcium-binding domain in the interval 29–69 (DVDECVEGTDNCHIDAICQNTPRSYKCICKSGYTGDGKHCK). 26 disulfide bridges follow: C33–C46, C40–C55, C57–C68, C74–C86, C82–C95, C97–C110, C116–C127, C123–C136, C161–C172, C168–C182, C184–C197, C201–C212, C208–C221, C223–C236, C240–C251, C247–C260, C262–C275, C281–C292, C288–C301, C303–C316, C322–C332, C328–C341, C343–C355, C361–C372, C368–C381, and C383–C397. The EGF-like 2; calcium-binding domain maps to 70-111 (DVDECEREDNAGCVHDCVNIPGNYRCTCYDGFHLAHDGHNCL). The EGF-like 3; calcium-binding domain occupies 112–148 (DVDECAEGNGGCQQSCVNMMGSYECHCREGFFLSDNQ). 3 EGF-like domains span residues 157–198 (EGMN…RDCK), 199–237 (LTCN…KTCI), and 238–276 (ETCA…KTCK). In terms of domain architecture, EGF-like 7; calcium-binding spans 277 to 317 (DIDECRLNNGGCDHICRNTVGSFECSCKKGYKLLINERNCQ). The 39-residue stretch at 318–356 (DIDECSFDRTCDHICVNTPGSFQCLCHRGYLLYGITHCG) folds into the EGF-like 8; calcium-binding domain. Residues 357-398 (DVDECSINRGGCRFGCINTPGSYQCTCPAGQGRLHWNGKDCT) form the EGF-like 9; calcium-binding domain. 5 N-linked (GlcNAc...) asparagine glycosylation sites follow: N417, N464, N685, N756, and N785. Cystine bridges form between C804–C830 and C857–C878. The 113-residue stretch at 804 to 916 (CGGELGEFTG…RGFQIPYVTY (113 aa)) folds into the CUB domain.

As to quaternary structure, forms homooligomers. Forms heterooligomers with SCUBE1 and SCUBE2. Interacts with TGFBR2 through the CUB domain; this interaction does not affect TGFB1-binding to TGFBR2. Interacts with BMP2, BMP4 and BMP7; the interaction is mediated by the CUB domain. Interacts with BMPR1A, BMPR1B and BMPR2; the interaction with BMPR1A and BMPR1B is BMP2- and BMP4-dependent. N-glycosylated. In terms of processing, proteolytic cleavage produces a CUB-containing C-terminal fragment that retains the ability to bind to TGFBR2. This reaction is catalyzed in vitro by MMP2 and, to a lesser extent, by MMP9. As to expression, highly expressed in osteoblasts. In normal lung, mainly expressed in bronchial epithelial cells. Tends to be up-regulated in lung cancer cells.

The protein localises to the secreted. It localises to the cell surface. In terms of biological role, is a positive regulator of the BMP signaling pathway, required for proper chondrogenesis, osteogenesis and skeletal development. It acts as a coreceptor for BMP ligands, particularly BMP2 and BMP4, facilitating their interactions with BMP type I receptors. It is required for ligand-induced recruitment of BMP receptors to lipid rafts. Binds to TGFBR2 and activates TGFB signaling. In lung cancer cells, could serve as an endogenous autocrine and paracrine ligand of TGFBR2, which could regulate TGFBR2 signaling and hence modulate epithelial-mesenchymal transition and cancer progression. The sequence is that of Signal peptide, CUB and EGF-like domain-containing protein 3 from Homo sapiens (Human).